The following is a 494-amino-acid chain: NADPH:adrenodoxin oxidoreductase, mitochondrial (494 aa).

The N-terminal 34 residues, 1-34 (MAPRCWRWWSWSAWPGVRPLPSRSTPTPGFCKKF), are a transit peptide targeting the mitochondrion. FAD contacts are provided by A51, E72, L80, and V116. NADP(+) is bound by residues 187–190 (QGNV), 231–232 (RR), and E243. A Phosphoserine modification is found at S313. FAD-binding positions include W401 and 408-410 (GVI). G408 is an NADP(+) binding site.

It belongs to the ferredoxin--NADP reductase type 1 family. In terms of assembly, monomer. Interacts directly with FDX1. FAD is required as a cofactor.

The protein resides in the mitochondrion inner membrane. It carries out the reaction 2 reduced [adrenodoxin] + NADP(+) + H(+) = 2 oxidized [adrenodoxin] + NADPH. It catalyses the reaction 2 reduced [2Fe-2S]-[ferredoxin] + NADP(+) + H(+) = 2 oxidized [2Fe-2S]-[ferredoxin] + NADPH. It functions in the pathway steroid metabolism; cholesterol metabolism. Serves as the first electron transfer protein in all the mitochondrial P450 systems including cholesterol side chain cleavage in all steroidogenic tissues, steroid 11-beta hydroxylation in the adrenal cortex, 25-OH-vitamin D3-24 hydroxylation in the kidney, and sterol C-27 hydroxylation in the liver. Also acts as a ferredoxin--NADP(+) reductase essential for coenzyme Q biosynthesis: together with FDX2, transfers the electrons required for the hydroxylation reaction performed by COQ6. This Rattus norvegicus (Rat) protein is NADPH:adrenodoxin oxidoreductase, mitochondrial (Fdxr).